A 130-amino-acid polypeptide reads, in one-letter code: Small ribosomal subunit protein uS9 (130 aa).

Residues 102–130 are disordered; that stretch reads GFLTRDPRMKERKKYGLKKARRAPQFSKR. Positions 111 to 130 are enriched in basic residues; that stretch reads KERKKYGLKKARRAPQFSKR.

The protein belongs to the universal ribosomal protein uS9 family.

This Clostridium novyi (strain NT) protein is Small ribosomal subunit protein uS9.